The following is a 275-amino-acid chain: tRNA uridine(34) hydroxylase (275 aa).

The region spanning 121 to 214 is the Rhodanese domain; sequence SQPDVLVIDT…YLEKTYNKNG (94 aa). Cys-174 serves as the catalytic Cysteine persulfide intermediate.

Belongs to the TrhO family.

The catalysed reaction is uridine(34) in tRNA + AH2 + O2 = 5-hydroxyuridine(34) in tRNA + A + H2O. In terms of biological role, catalyzes oxygen-dependent 5-hydroxyuridine (ho5U) modification at position 34 in tRNAs. This chain is tRNA uridine(34) hydroxylase, found in Wolbachia pipientis wMel.